The following is a 1023-amino-acid chain: 2-oxoglutarate dehydrogenase complex component E1 (1023 aa).

The N-terminal 40 residues, 1–40 (MFHLRTCAAKLRPLTASQTVKTFSQNRPAAARTFGQIRCY), are a transit peptide targeting the mitochondrion. Residue Lys-74 is modified to N6-succinyllysine. Ser-100 carries the phosphoserine modification. His-143, Asp-156, and Asp-158 together coordinate Ca(2+). Position 312 (Arg-312) interacts with thiamine diphosphate. Position 401 is an N6-acetyllysine (Lys-401). Residues Asp-411, Asn-444, and Ile-446 each contribute to the thiamine diphosphate site. Mg(2+)-binding residues include Asp-411, Asn-444, and Ile-446. Lys-534 is covalently cross-linked (Glycyl lysine isopeptide (Lys-Gly) (interchain with G-Cter in ubiquitin)). Lys-564 is modified (N6-succinyllysine). Residue Gln-676 coordinates thiamine diphosphate. Lys-970 bears the N6-acetyllysine mark.

It belongs to the alpha-ketoglutarate dehydrogenase family. In terms of assembly, homodimer. The 2-oxoglutarate dehydrogenase complex is composed of OGDH (2-oxoglutarate dehydrogenase; E1), DLST (dihydrolipoamide succinyltransferase; E2), DLD (dihydrolipoamide dehydrogenase; E3) and the assembly factor KGD4. It contains multiple copies of the three enzymatic components (E1, E2 and E3). In the nucleus, the 2-oxoglutarate dehydrogenase complex associates with KAT2A. Interacts with ABHD11; this interaction maintains the functional lipoylation of the 2-oxoglutarate dehydrogenase complex. Requires thiamine diphosphate as cofactor. The cofactor is Mg(2+).

The protein localises to the mitochondrion. The protein resides in the nucleus. It catalyses the reaction N(6)-[(R)-lipoyl]-L-lysyl-[protein] + 2-oxoglutarate + H(+) = N(6)-[(R)-S(8)-succinyldihydrolipoyl]-L-lysyl-[protein] + CO2. With respect to regulation, calcium ions and ADP stimulate, whereas ATP and NADH reduce catalytic activity. Its function is as follows. 2-oxoglutarate dehydrogenase (E1o) component of the 2-oxoglutarate dehydrogenase complex (OGDHC). Participates in the first step, rate limiting for the overall conversion of 2-oxoglutarate to succinyl-CoA and CO(2) catalyzed by the whole OGDHC. Catalyzes the irreversible decarboxylation of 2-oxoglutarate (alpha-ketoglutarate) via the thiamine diphosphate (ThDP) cofactor and subsequent transfer of the decarboxylated acyl intermediate on an oxidized dihydrolipoyl group that is covalently amidated to the E2 enzyme (dihydrolipoyllysine-residue succinyltransferase or DLST). Plays a key role in the Krebs (citric acid) cycle, which is a common pathway for oxidation of fuel molecules, including carbohydrates, fatty acids, and amino acids. Can catalyze the decarboxylation of 2-oxoadipate in vitro, but at a much lower rate than 2-oxoglutarate. Mainly active in the mitochondrion. A fraction of the 2-oxoglutarate dehydrogenase complex also localizes in the nucleus and is required for lysine succinylation of histones: associates with KAT2A on chromatin and provides succinyl-CoA to histone succinyltransferase KAT2A. The protein is 2-oxoglutarate dehydrogenase complex component E1 of Bos taurus (Bovine).